Consider the following 59-residue polypeptide: Large ribosomal subunit protein bL32 (59 aa).

The interval 1–20 (MAVPRNRHSNARKNIRRSHH) is disordered.

Belongs to the bacterial ribosomal protein bL32 family.

This chain is Large ribosomal subunit protein bL32 (rpmF), found in Chlamydia muridarum (strain MoPn / Nigg).